The following is a 973-amino-acid chain: GATOR2 complex protein WDR59 (973 aa).

WD repeat units follow at residues 57 to 98, 103 to 143, 146 to 185, 189 to 229, 232 to 276, and 280 to 324; these read QSKW…GEVC, GHTR…KPTV, SAVA…TAVE, AHLS…KYLN, PCQV…TPVH, and GHDD…QRLC. The disordered stretch occupies residues 346–365; it reads DKALQPQDSEPQHSSGHGDE. The span at 351–360 shows a compositional bias: polar residues; sequence PQDSEPQHSS. The RWD domain occupies 393–494; it reads QEFSLINVQI…RQLVSWLESV (102 aa). The segment at 900 to 920 adopts a C4-type zinc-finger fold; the sequence is YCSHCRSEARGTQCAICKGFT. Zn(2+)-binding residues include cysteine 901, cysteine 904, cysteine 913, cysteine 916, cysteine 926, cysteine 937, histidine 942, histidine 945, histidine 948, cysteine 959, cysteine 963, cysteine 965, and cysteine 967. The segment at 921 to 970 adopts an RING-type; atypical zinc-finger fold; it reads FQCAICHVAVRGSSNFCLTCGHGGHTSHMMEWFRTQEVCPTGCGCHCLLE.

Belongs to the WD repeat WDR59 family. Component of the GATOR2 subcomplex, composed of MIOS, SEC13, SEH1L, WDR24 and WDR59. The GATOR2 complex interacts with CASTOR1 and CASTOR2; the interaction is negatively regulated by arginine. The GATOR2 complex interacts with SESN1, SESN2 and SESN3; the interaction is negatively regulated by amino acids. Interacts with DDB1-CUL4A/B E3 ligase complexes.

The protein localises to the lysosome membrane. The GATOR2 complex is negatively regulated by the upstream amino acid sensors CASTOR1 and SESN2, which sequester the GATOR2 complex in absence of amino acids. In the presence of abundant amino acids, GATOR2 is released from CASTOR1 and SESN2 and activated. As a component of the GATOR2 complex, functions as an activator of the amino acid-sensing branch of the mTORC1 signaling pathway. The GATOR2 complex indirectly activates mTORC1 through the inhibition of the GATOR1 subcomplex. GATOR2 probably acts as an E3 ubiquitin-protein ligase toward GATOR1. In the presence of abundant amino acids, the GATOR2 complex mediates ubiquitination of the NPRL2 core component of the GATOR1 complex, leading to GATOR1 inactivation. In the absence of amino acids, GATOR2 is inhibited, activating the GATOR1 complex. The sequence is that of GATOR2 complex protein WDR59 from Gallus gallus (Chicken).